Reading from the N-terminus, the 469-residue chain is Argininosuccinate lyase (469 aa).

Belongs to the lyase 1 family. Argininosuccinate lyase subfamily.

It localises to the cytoplasm. The enzyme catalyses 2-(N(omega)-L-arginino)succinate = fumarate + L-arginine. The protein operates within amino-acid biosynthesis; L-arginine biosynthesis; L-arginine from L-ornithine and carbamoyl phosphate: step 3/3. This Novosphingobium aromaticivorans (strain ATCC 700278 / DSM 12444 / CCUG 56034 / CIP 105152 / NBRC 16084 / F199) protein is Argininosuccinate lyase.